The primary structure comprises 517 residues: MQNTDTTKYIIHSKINADGVIERPDIVGAIFGQTEGLLGADLDLRDLQKTGRIGRIEVMVTAKGGKTKGNIFVPSSLDKVETSILAASLETIDRVGPCSAKIEVFQVEDVRAVKRKKIIERAKLIFTKMFDETVPESQELADEVRQSVRVDELTYYGKSRIPCGPNVLNSDAIIILEGRADILNLLRYGIKNTICVGGTNIPPEVAELTKKKTVTAFTDGDRGGELIIRELLQVADIDYVARAPDGKCVEDLVQKEVIRALRRKVPVEQIIEKYGIQEREGEESTRVERGSKRKIRAPEIAPRITEKKLHKRIKIHRVSSKPDLYEEELPEEETKGKASAKAFEKVSVKAAEKVSEMVPATAGKVKTRSIVAKPQISARKAPAAARVSREKPAEKVPSAVKVSRGEAVRVSPAPVKTVPVSPEATRFRPHVEALKGTLTARILDSQDKVIEEIAVRDLASRLKTYKENIQSVVFDGVITQRLVDIASSNAIKNLIGVKIGNIAKVPADMEVLTASML.

In terms of domain architecture, Toprim spans 171–257 (DAIIILEGRA…CVEDLVQKEV (87 aa)). Positions 177, 219, and 221 each coordinate Mg(2+).

It belongs to the archaeal DnaG primase family. Forms a ternary complex with MCM helicase and DNA. Component of the archaeal exosome complex. It depends on Mg(2+) as a cofactor.

It carries out the reaction ssDNA + n NTP = ssDNA/pppN(pN)n-1 hybrid + (n-1) diphosphate.. In terms of biological role, RNA polymerase that catalyzes the synthesis of short RNA molecules used as primers for DNA polymerase during DNA replication. Also part of the exosome, which is a complex involved in RNA degradation. Acts as a poly(A)-binding protein that enhances the interaction between heteromeric, adenine-rich transcripts and the exosome. The chain is DNA primase DnaG from Methanosarcina barkeri (strain Fusaro / DSM 804).